A 162-amino-acid polypeptide reads, in one-letter code: Ribosome maturation factor RimP (162 aa).

It belongs to the RimP family.

It localises to the cytoplasm. Its function is as follows. Required for maturation of 30S ribosomal subunits. This chain is Ribosome maturation factor RimP, found in Leptospira biflexa serovar Patoc (strain Patoc 1 / Ames).